The primary structure comprises 143 residues: Actin-depolymerizing factor (143 aa).

The 133-residue stretch at 11–143 (GMGVADHSKN…DLEVLRERAH (133 aa)) folds into the ADF-H domain.

Belongs to the actin-binding proteins ADF family.

Actin-depolymerizing protein. Severs actin filaments (F-actin) and binds to actin monomers. This Vitis vinifera (Grape) protein is Actin-depolymerizing factor.